The chain runs to 511 residues: GATOR complex protein NPRL3 (511 aa).

Residues 37–58 (KPATKAPSKDPQPSSSNPGQCV) form a disordered region.

It belongs to the NPR3 family. Probably part of the GATOR complex.

It localises to the lysosome membrane. In terms of biological role, as a component of the GATOR complex may function in the amino acid-sensing branch of the TORC1 signaling pathway. The protein is GATOR complex protein NPRL3 (nprl-3) of Caenorhabditis elegans.